A 317-amino-acid chain; its full sequence is Aspartate carbamoyltransferase catalytic subunit (317 aa).

Positions 66 and 67 each coordinate carbamoyl phosphate. Lysine 94 provides a ligand contact to L-aspartate. Residues arginine 116, histidine 144, and glutamine 147 each coordinate carbamoyl phosphate. Positions 177 and 231 each coordinate L-aspartate. Positions 272 and 273 each coordinate carbamoyl phosphate.

The protein belongs to the aspartate/ornithine carbamoyltransferase superfamily. ATCase family. As to quaternary structure, heterododecamer (2C3:3R2) of six catalytic PyrB chains organized as two trimers (C3), and six regulatory PyrI chains organized as three dimers (R2).

The catalysed reaction is carbamoyl phosphate + L-aspartate = N-carbamoyl-L-aspartate + phosphate + H(+). It participates in pyrimidine metabolism; UMP biosynthesis via de novo pathway; (S)-dihydroorotate from bicarbonate: step 2/3. Catalyzes the condensation of carbamoyl phosphate and aspartate to form carbamoyl aspartate and inorganic phosphate, the committed step in the de novo pyrimidine nucleotide biosynthesis pathway. The chain is Aspartate carbamoyltransferase catalytic subunit from Beijerinckia indica subsp. indica (strain ATCC 9039 / DSM 1715 / NCIMB 8712).